The sequence spans 346 residues: 4-hydroxy-3-methylbut-2-enyl diphosphate reductase (346 aa).

Position 19 (Cys-19) interacts with [4Fe-4S] cluster. The (2E)-4-hydroxy-3-methylbut-2-enyl diphosphate site is built by His-48 and His-84. Residues His-48 and His-84 each contribute to the dimethylallyl diphosphate site. Positions 48 and 84 each coordinate isopentenyl diphosphate. Residue Cys-106 coordinates [4Fe-4S] cluster. A (2E)-4-hydroxy-3-methylbut-2-enyl diphosphate-binding site is contributed by His-134. His-134 is a binding site for dimethylallyl diphosphate. His-134 provides a ligand contact to isopentenyl diphosphate. Catalysis depends on Glu-136, which acts as the Proton donor. Thr-175 contributes to the (2E)-4-hydroxy-3-methylbut-2-enyl diphosphate binding site. [4Fe-4S] cluster is bound at residue Cys-205. (2E)-4-hydroxy-3-methylbut-2-enyl diphosphate-binding residues include Ser-233, Ser-234, Asn-235, and Ser-278. Residues Ser-233, Ser-234, Asn-235, and Ser-278 each coordinate dimethylallyl diphosphate. Isopentenyl diphosphate contacts are provided by Ser-233, Ser-234, Asn-235, and Ser-278.

The protein belongs to the IspH family. [4Fe-4S] cluster is required as a cofactor.

The enzyme catalyses isopentenyl diphosphate + 2 oxidized [2Fe-2S]-[ferredoxin] + H2O = (2E)-4-hydroxy-3-methylbut-2-enyl diphosphate + 2 reduced [2Fe-2S]-[ferredoxin] + 2 H(+). The catalysed reaction is dimethylallyl diphosphate + 2 oxidized [2Fe-2S]-[ferredoxin] + H2O = (2E)-4-hydroxy-3-methylbut-2-enyl diphosphate + 2 reduced [2Fe-2S]-[ferredoxin] + 2 H(+). The protein operates within isoprenoid biosynthesis; dimethylallyl diphosphate biosynthesis; dimethylallyl diphosphate from (2E)-4-hydroxy-3-methylbutenyl diphosphate: step 1/1. It functions in the pathway isoprenoid biosynthesis; isopentenyl diphosphate biosynthesis via DXP pathway; isopentenyl diphosphate from 1-deoxy-D-xylulose 5-phosphate: step 6/6. Catalyzes the conversion of 1-hydroxy-2-methyl-2-(E)-butenyl 4-diphosphate (HMBPP) into a mixture of isopentenyl diphosphate (IPP) and dimethylallyl diphosphate (DMAPP). Acts in the terminal step of the DOXP/MEP pathway for isoprenoid precursor biosynthesis. This is 4-hydroxy-3-methylbut-2-enyl diphosphate reductase from Brucella abortus (strain S19).